Here is a 732-residue protein sequence, read N- to C-terminus: Zinc-exporting P-type ATPase (732 aa).

The region spanning 29-96 is the HMA domain; that stretch reads GRMRVRADWV…AIGGAKHVAA (68 aa). Helical transmembrane passes span 105-123, 146-164, 172-186, 195-209, 342-366, and 372-390; these read HSTE…GGAA, MVAT…RGAL, AGTD…IASL, LTVL…YLQD, VGEN…LVTG, and MTML…TPTA. D423 serves as the catalytic 4-aspartylphosphate intermediate. Mg(2+) is bound by residues D423, T425, and D625. 2 helical membrane passes run 676–695 and 705–724; these read AVDV…AAGL and PVLA…ANSS.

This sequence belongs to the cation transport ATPase (P-type) (TC 3.A.3) family. Type IB subfamily.

The protein resides in the cell membrane. The catalysed reaction is Zn(2+)(in) + ATP + H2O = Zn(2+)(out) + ADP + phosphate + H(+). In terms of biological role, zn(2+) efflux transporter which is involved in detoxification of zinc during infection. This chain is Zinc-exporting P-type ATPase, found in Mycobacterium marinum (strain ATCC BAA-535 / M).